A 323-amino-acid chain; its full sequence is Ferrochelatase (323 aa).

Positions 195 and 276 each coordinate Fe cation.

The protein belongs to the ferrochelatase family.

The protein localises to the cytoplasm. It catalyses the reaction heme b + 2 H(+) = protoporphyrin IX + Fe(2+). Its pathway is porphyrin-containing compound metabolism; protoheme biosynthesis; protoheme from protoporphyrin-IX: step 1/1. Catalyzes the ferrous insertion into protoporphyrin IX. In Mannheimia succiniciproducens (strain KCTC 0769BP / MBEL55E), this protein is Ferrochelatase.